The sequence spans 388 residues: MSSYIVHRQNITRKEQSTIYWVNVLLSMLTGLLLVAIAWPISWFYHLPQLGGLIMLTSLNFLVLGSLSQYQAHFIKAKRMILLAKIEMVTKFLAFAFTVILLYYSPLGVSAVILGLFANAALRIGCMIWFGDKSWRPTFEFDQGTFYSSLKYGIYQLGSQTINQLRTQADSLIVGKVMGAELLGVYSLAKELILQPLKLVTPVINRLALPRFAEKQHDPVRLQQLFLKGTFVIMLFSAIMYLAIGILSPVIVRVLYGPAHEAVGQLIPLMLLFGMLRPMGGLTGAISQANGRTNVEFYWNVVASIIVVLVLASVWIWPQVEYVALTLSISQVLISVFAHPFFIKPVIGIRFLPYARQWISVSAVFVGIIALVSHYNLFIMPEWFSRWL.

6 helical membrane passes run 24–44 (VLLSMLTGLLLVAIAWPISWF), 47–67 (LPQLGGLIMLTSLNFLVLGSL), 97–117 (FTVILLYYSPLGVSAVILGLF), 231–251 (FVIMLFSAIMYLAIGILSPVI), 297–317 (FYWNVVASIIVVLVLASVWIW), and 359–379 (ISVSAVFVGIIALVSHYNLFI).

This sequence belongs to the polysaccharide synthase family.

It is found in the cell membrane. It participates in glycan metabolism; exopolysaccharide biosynthesis. In terms of biological role, involved in the biosynthesis of amylovoran which functions as a virulence factor. The polypeptide is Amylovoran biosynthesis protein AmsL (amsL) (Erwinia amylovora (Fire blight bacteria)).